Consider the following 389-residue polypeptide: Chitinase-3-like protein 1 (389 aa).

Residues 1 to 29 form the signal peptide; the sequence is MHTSTEARMGMRAALTGFAVLMLLQSCSA. Residues 30–389 enclose the GH18 domain; it reads YKLVCYFTSW…LTNAIKDALA (360 aa). The cysteines at positions 34 and 59 are disulfide-linked. Asn68 is a glycosylation site (N-linked (GlcNAc...) asparagine). Chitin is bound by residues 79–80, 106–109, Tyr150, and 213–216; these read EW, GGWK, and MTYD. Cys309 and Cys372 form a disulfide bridge. Residues 333–347 are important for AKT1 activation and IL8 production; sequence QWVGYEDKESVKNKV. Trp361 serves as a coordination point for chitin.

This sequence belongs to the glycosyl hydrolase 18 family. Monomer. Detected in lung in pulmonary macrophages and alveolar type 2 cells and in bronchoalveolar lavage (BAL) fluids. Expressed in mammary tumor cells (at protein level). Expressed in lung. Not detected in non-inflammatory colon.

The protein resides in the secreted. It localises to the extracellular space. It is found in the cytoplasm. The protein localises to the endoplasmic reticulum. Carbohydrate-binding lectin with a preference for chitin. Has no chitinase activity. May play a role in tissue remodeling and in the capacity of cells to respond to and cope with changes in their environment. Plays a role in T-helper cell type 2 (Th2) inflammatory response and IL-13-induced inflammation, regulating allergen sensitization, inflammatory cell apoptosis, dendritic cell accumulation and M2 macrophage differentiation. Facilitates invasion of pathogenic enteric bacteria into colonic mucosa and lymphoid organs. Mediates activation of AKT1 signaling pathway and subsequent IL8 production in colonic epithelial cells. Regulates antibacterial responses in lung by contributing to macrophage bacterial killing, controlling bacterial dissemination and augmenting host tolerance. Also regulates hyperoxia-induced injury, inflammation and epithelial apoptosis in lung. This chain is Chitinase-3-like protein 1 (Chi3l1), found in Mus musculus (Mouse).